A 605-amino-acid chain; its full sequence is DNA primase (605 aa).

The CHC2-type zinc finger occupies 39–63 (CPFHHERTPSFHVVPDKKMYYCFGC). Residues 257–338 (RAAIICEGYM…EVRIVELNGG (82 aa)) enclose the Toprim domain. Positions 263, 307, and 309 each coordinate Mg(2+).

The protein belongs to the DnaG primase family. In terms of assembly, monomer. Interacts with DnaB. Zn(2+) is required as a cofactor. Requires Mg(2+) as cofactor.

The enzyme catalyses ssDNA + n NTP = ssDNA/pppN(pN)n-1 hybrid + (n-1) diphosphate.. Its function is as follows. RNA polymerase that catalyzes the synthesis of short RNA molecules used as primers for DNA polymerase during DNA replication. The protein is DNA primase of Treponema pallidum (strain Nichols).